The sequence spans 193 residues: Protein D5 (193 aa).

Functionally, repression of replication initiation (possible). The polypeptide is Protein D5 (ddpE) (Dictyostelium discoideum (Social amoeba)).